The sequence spans 362 residues: Manganese peroxidase 3 (362 aa).

The N-terminal stretch at 1–18 (MAFKQLLTAISIVSVANA) is a signal peptide. Residues 19–23 (ALTRR) constitute a propeptide that is removed on maturation. 4 disulfides stabilise this stretch: Cys26-Cys39, Cys38-Cys309, Cys58-Cys144, and Cys273-Cys338. The Mn(2+) site is built by Glu60 and Glu64. The active-site Proton acceptor is His71. Residues Asp72, Gly90, Asp92, and Ser94 each contribute to the Ca(2+) site. Asn126 carries an N-linked (GlcNAc...) asparagine glycan. His200 lines the heme b pocket. Thr201 provides a ligand contact to Ca(2+). Residue Asp206 coordinates Mn(2+). Ca(2+) is bound by residues Asp218, Thr220, Ile223, and Asp225. The interval 341–362 (TPFPSLSADPGPATSVAPVPPS) is disordered.

It belongs to the peroxidase family. Ligninase subfamily. Requires heme b as cofactor. Ca(2+) serves as cofactor.

Its subcellular location is the secreted. It catalyses the reaction 2 Mn(2+) + H2O2 + 2 H(+) = 2 Mn(3+) + 2 H2O. Catalyzes the oxidation of Mn(2+) to Mn(3+). The latter, acting as a diffusible redox mediator, is capable of oxidizing a variety of lignin compounds. This isozyme is also able to oxidize phenols and amines in the absence of Mn(2+), similar to versatile peroxidases. This Phlebia radiata (White-rot fungus) protein is Manganese peroxidase 3 (mnp3).